We begin with the raw amino-acid sequence, 159 residues long: Protein-export protein SecB (159 aa).

This sequence belongs to the SecB family. Homotetramer, a dimer of dimers. One homotetramer interacts with 1 SecA dimer.

The protein resides in the cytoplasm. Functionally, one of the proteins required for the normal export of preproteins out of the cell cytoplasm. It is a molecular chaperone that binds to a subset of precursor proteins, maintaining them in a translocation-competent state. It also specifically binds to its receptor SecA. This Nitrobacter winogradskyi (strain ATCC 25391 / DSM 10237 / CIP 104748 / NCIMB 11846 / Nb-255) protein is Protein-export protein SecB.